A 150-amino-acid polypeptide reads, in one-letter code: Large ribosomal subunit protein uL15 (150 aa).

A disordered region spans residues 12–43 (AKKRKKRVGCGESSGHGKTSGRGHKGQKARAG). Residues 30–39 (TSGRGHKGQK) show a composition bias toward basic residues.

Belongs to the universal ribosomal protein uL15 family. As to quaternary structure, part of the 50S ribosomal subunit.

In terms of biological role, binds to the 23S rRNA. The sequence is that of Large ribosomal subunit protein uL15 from Methylacidiphilum infernorum (isolate V4) (Methylokorus infernorum (strain V4)).